We begin with the raw amino-acid sequence, 659 residues long: MFS-type transporter phiD (659 aa).

Disordered regions lie at residues 1 to 42 (MGED…SWRV) and 76 to 127 (DLTV…IGKQ). The segment covering 93-109 (SIEKSKEDGDADDKRQS) has biased composition (basic and acidic residues). The helical transmembrane segment at 144-164 (LIVLAASLAGFFSPLSASIYY) threads the bilayer. The N-linked (GlcNAc...) asparagine glycan is linked to asparagine 182. 5 helical membrane passes run 183–203 (LTVT…AGFS), 210–230 (PAYA…ALQN), 235–257 (LMVL…NGVV), 269–289 (FIAF…VIGG), and 299–319 (WIFW…FLFF). The N-linked (GlcNAc...) asparagine glycan is linked to asparagine 338. 6 consecutive transmembrane segments (helical) span residues 385–405 (AMIL…LTGA), 422–442 (LMYI…GKLV), 475–495 (LEVG…YGWI), 502–522 (VWGP…FFQV), 549–569 (LGAA…EGWA), and 572–592 (IVAM…VNGI). Basic and acidic residues-rich tracts occupy residues 605–634 (KKAG…QKAE) and 641–651 (DLEKQDRKDSQ). Residues 605-659 (KKAGREAKIEAEKRAREEIETKKEAKQKAEEDVEIGDLEKQDRKDSQRPTSSKAT) are disordered.

It belongs to the major facilitator superfamily.

Its subcellular location is the membrane. In terms of biological role, MFS-type transporter; part of the gene cluster that mediates the biosynthesis of the antihypercholesterolemic agents phomoidrides which are dimeric anhydrides. This is MFS-type transporter phiD from Fungal sp. (strain ATCC 74256).